A 389-amino-acid polypeptide reads, in one-letter code: Carbamoyl phosphate synthase small chain (389 aa).

Residues 1-199 form a CPSase region; the sequence is MFNPAILVLA…AGKPFNLQTT (199 aa). Ser-50, Gly-251, and Gly-253 together coordinate L-glutamine. One can recognise a Glutamine amidotransferase type-1 domain in the interval 203–389; that stretch reads HVVAYDFGIK…FINAVQATKA (187 aa). Cys-279 serves as the catalytic Nucleophile. L-glutamine is bound by residues Leu-280, Gln-283, Asn-321, Gly-323, and Phe-324. Residues His-363 and Glu-365 contribute to the active site.

It belongs to the CarA family. In terms of assembly, composed of two chains; the small (or glutamine) chain promotes the hydrolysis of glutamine to ammonia, which is used by the large (or ammonia) chain to synthesize carbamoyl phosphate. Tetramer of heterodimers (alpha,beta)4.

The enzyme catalyses hydrogencarbonate + L-glutamine + 2 ATP + H2O = carbamoyl phosphate + L-glutamate + 2 ADP + phosphate + 2 H(+). It catalyses the reaction L-glutamine + H2O = L-glutamate + NH4(+). Its pathway is amino-acid biosynthesis; L-arginine biosynthesis; carbamoyl phosphate from bicarbonate: step 1/1. It participates in pyrimidine metabolism; UMP biosynthesis via de novo pathway; (S)-dihydroorotate from bicarbonate: step 1/3. Its function is as follows. Small subunit of the glutamine-dependent carbamoyl phosphate synthetase (CPSase). CPSase catalyzes the formation of carbamoyl phosphate from the ammonia moiety of glutamine, carbonate, and phosphate donated by ATP, constituting the first step of 2 biosynthetic pathways, one leading to arginine and/or urea and the other to pyrimidine nucleotides. The small subunit (glutamine amidotransferase) binds and cleaves glutamine to supply the large subunit with the substrate ammonia. This is Carbamoyl phosphate synthase small chain from Haemophilus ducreyi (strain 35000HP / ATCC 700724).